The sequence spans 357 residues: Glucose-6-phosphatase catalytic subunit 1 (357 aa).

Topologically, residues 1–28 (MEEGMNILHDFGIQSTRYLQVNYQDSQD) are lumenal. Residues 29–49 (WFILVSVIADLRNAFYVLFPI) form a helical membrane-spanning segment. The Cytoplasmic segment spans residues 50–60 (WFHLKETVGIN). Residues 61-81 (LLWVAVVGDWFNLVFKWILFG) traverse the membrane as a helical segment. At 82–117 (QRPYWWVLDTDYYSNSSVPIIKQFPVTCETGPGSPS) the chain is on the lumenal side. A substrate-binding site is contributed by Arg-83. A glycan (N-linked (GlcNAc...) asparagine) is linked at Asn-96. Residues 118 to 138 (GHAMGAAGVYYVMVTSTLAIF) traverse the membrane as a helical segment. His-119 (proton donor) is an active-site residue. Residues 139-147 (RGKKKPTYG) are Cytoplasmic-facing. Residues 148–168 (FRCLNVILWLGFWAVQLNVCL) traverse the membrane as a helical segment. At 169–179 (SRIYLAAHFPH) the chain is on the lumenal side. Arg-170 is a binding site for substrate. The active-site Nucleophile is His-176. The helical transmembrane segment at 180–202 (QVVAGVLSGIAVAETFSHIRGIY) threads the bilayer. The Cytoplasmic portion of the chain corresponds to 203 to 211 (NASLRKYCL). A helical membrane pass occupies residues 212–232 (ITIFLFGFALGFYLLLKGLGV). Over 233 to 254 (DLLWTLEKAKRWCERPEWVHLD) the chain is Lumenal. A helical membrane pass occupies residues 255–275 (TTPFASLFKNLGTLLGLGLAL). At 276–291 (NSSMYRKSCKGELSKL) the chain is on the cytoplasmic side. The helical transmembrane segment at 292–312 (LPFRFACIVASLVLLHLFDSL) threads the bilayer. The Lumenal portion of the chain corresponds to 313-320 (KPPSQVEL). Residues 321–341 (IFYILSFCKSATVPFASVSLI) form a helical membrane-spanning segment. The Cytoplasmic segment spans residues 342–357 (PYCLARILGQTHKKSL). The short motif at 354-357 (KKSL) is the Prevents secretion from ER element.

This sequence belongs to the glucose-6-phosphatase family. In terms of tissue distribution, liver and kidney.

The protein resides in the endoplasmic reticulum membrane. The enzyme catalyses D-glucose 6-phosphate + H2O = D-glucose + phosphate. Its pathway is carbohydrate biosynthesis; gluconeogenesis. Its function is as follows. Hydrolyzes glucose-6-phosphate to glucose in the endoplasmic reticulum. Forms with the glucose-6-phosphate transporter (SLC37A4/G6PT) the complex responsible for glucose production in the terminal step of glycogenolysis and gluconeogenesis. Hence, it is the key enzyme in homeostatic regulation of blood glucose levels. The polypeptide is Glucose-6-phosphatase catalytic subunit 1 (G6pc1) (Mus musculus (Mouse)).